The following is a 119-amino-acid chain: Anther-specific protein BCP1 (119 aa).

Positions 1 to 23 (MGRQNVVVVFGLVFLAVLGLAAA) are cleaved as a signal peptide. Residues 24 to 42 (ASSPSPSASPSKAPSTSTP) show a composition bias toward low complexity. Residues 24-95 (ASSPSPSASP…PSGSADSADS (72 aa)) are disordered. Over 24–98 (ASSPSPSASP…SADSADSGAA (75 aa)) the chain is Extracellular. The span at 56–69 (TDDDAAASPGDDDV) shows a compositional bias: acidic residues. Positions 82-95 (GSNGPSGSADSADS) are enriched in low complexity. The chain crosses the membrane as a helical span at residues 99–118 (ALGVSAVVVGVTSIVGSFLF). A topological domain (cytoplasmic) is located at residue Phe-119.

Expressed in mature pollen grains, developing microspores and tapetal cells.

The protein localises to the membrane. In terms of biological role, required for pollen fertility and development. Active in both diploid tapetum and haploid microspores. Major pollen protein. In Brassica campestris (Field mustard), this protein is Anther-specific protein BCP1 (BCP1).